The primary structure comprises 360 residues: Phospho-N-acetylmuramoyl-pentapeptide-transferase (360 aa).

10 consecutive transmembrane segments (helical) span residues 27–47 (GAFMTALIFGFLFGRPLINVL), 71–91 (TPTMGGLLIVGALLTSTLLWA), 93–113 (WDNPFVWMVLFVTLAYALIGF), 134–154 (LALGVIIAVIAALWASYNHPA), 168–188 (TLINLGLLYVPFAICVIVGSA), 199–219 (GLAIMPAMIAASTLGVIAYAV), 239–259 (ILIFTAALFGAGLGFLWYNAP), 262–282 (AVFMGDTGSLALGGALGAIAV), 288–308 (LVLAIVGGLFVVEALSVIIQV), and 337–357 (TIVIRFWIISLILAMIGLATL).

Belongs to the glycosyltransferase 4 family. MraY subfamily. Mg(2+) is required as a cofactor.

It is found in the cell inner membrane. It catalyses the reaction UDP-N-acetyl-alpha-D-muramoyl-L-alanyl-gamma-D-glutamyl-meso-2,6-diaminopimeloyl-D-alanyl-D-alanine + di-trans,octa-cis-undecaprenyl phosphate = di-trans,octa-cis-undecaprenyl diphospho-N-acetyl-alpha-D-muramoyl-L-alanyl-D-glutamyl-meso-2,6-diaminopimeloyl-D-alanyl-D-alanine + UMP. Its pathway is cell wall biogenesis; peptidoglycan biosynthesis. In terms of biological role, catalyzes the initial step of the lipid cycle reactions in the biosynthesis of the cell wall peptidoglycan: transfers peptidoglycan precursor phospho-MurNAc-pentapeptide from UDP-MurNAc-pentapeptide onto the lipid carrier undecaprenyl phosphate, yielding undecaprenyl-pyrophosphoryl-MurNAc-pentapeptide, known as lipid I. The sequence is that of Phospho-N-acetylmuramoyl-pentapeptide-transferase from Ruegeria pomeroyi (strain ATCC 700808 / DSM 15171 / DSS-3) (Silicibacter pomeroyi).